The chain runs to 1244 residues: MDARATELLATLRNGNVSVDVKTTSLAKLKSEIKQKHVPDAAISPLFESFRLAIASQHYSLSSAGFSALGHLLKRLTLQEQHEAIALQGRATYQLLLERLGDHKERIRSQAAQAFTDFWPAASADVEHHVLGAALIGKNARAKETSMVWLAKMTREYGLLFRIYVPALVTCLEDADGVVRDTAKSTVIELFQSAPPRAISDLKKQLIQNNVRKSIATSILSSLGANIVADSETSSSFQSQSRSDITRPATSFSHRREEVPRSQSVLSMRSHSNADVHNIPKIDAAFKSQSKPTRSGHSSKDPTLSHTASSESLPAPRQDTTDGEGVEPLYINSHREFDDTIREMLPHFEGKESEQNWILREKSIMTLRRLTKGNAPHDYQQYYLAGIKSVLDGILKTANSLRTTLSAAGCYLLQDIARTCGPAIDPMVEILLQSLIKLSAALKKITAQNGNVTVDVIIGNVSYTARILQHIWGACQDKNVQPRQFATGWIKTIIIRQGKHKGSIEHSGGLDLIEKCIKKGLGDPNPGVREGMRGTFWAFYSVWPERADVIMSALEPKSKNLLERDPNNTHRGVASQSFDGSRGSQPHSTKSSLKEAINAQKKARLAASSNVPSRPESAQSSFPDPKSGRPAPRRPTGTSTIRVPTGEKLSQSASLSSAPMRPASRPRRPELVRPATADPYSSRRSAAPTAQSKASSPSDSPQKSKSKLMTTPRSRNPLARPKSRMDNAANVTNDKQRADPAATLAPKMRRRGPSEPDVVSAAARARIAILSPSRTEGDFSVASSQVKIDQKAEEAFQGTPTRGIENGTPLPASPLRSPLKGAFSTPTRNRKSSDGAPPSRIPISPSYSSRRSSEEPMLPRTPLDSRRSRGESDEAASQIPAPVDQSPIIDAINSQSPGILKVYEDPQSPHSKHSIVLGDTVPKTPGSQAKVMPLEELPLNESTTVPNRKHNQLPEHTPLLQPSPILTPSSENSHRRWKKVEGSERRRSLSPRSKDPVKAQDMITRGLARIRTGALDVHGYRKFQNLIKYHESISKDDTKYEDILMALLEALEKPDGDKGAPSGRSLDLKTQVLVTIRLMLVINREAFAAFYPRVMTAIITARKQYELTNHIVSGLEETAEDIVSACNPPQVIDAILDLLETEERSFESYRMVAMGSYILSGLLRRLNNQKLYLSQAELERLGKFANENLRSTQPDVRRAIIDFCPELYDMVQSEDAFWSMVNSSVEDFRPLLTYYIMRRPEKIG.

HEAT repeat units follow at residues 87–124 and 159–196; these read LQGR…AASA and LLFR…SAPP. A compositionally biased stretch (low complexity) spans 232-243; it reads ETSSSFQSQSRS. Disordered regions lie at residues 232-326, 561-758, and 795-998; these read ETSS…GEGV, LLER…EPDV, and AFQG…DPVK. 4 stretches are compositionally biased toward polar residues: residues 261–271, 287–312, 574–591, and 607–622; these read RSQSVLSMRSH, KSQS…SSES, ASQS…STKS, and ASSN…QSSF. 3 stretches are compositionally biased toward low complexity: residues 652 to 663, 690 to 703, and 837 to 850; these read SASLSSAPMRPA, AQSK…SPQK, and PPSR…YSSR. Basic and acidic residues-rich tracts occupy residues 863-872 and 979-998; these read LDSRRSRGES and KVEG…DPVK. 2 HEAT repeats span residues 1038-1075 and 1126-1163; these read TKYE…VLVT and CNPP…SGLL.

This sequence belongs to the CLASP family. In terms of assembly, interacts with microtubules.

It localises to the cytoplasm. The protein resides in the cytoskeleton. Its subcellular location is the nucleus. The protein localises to the spindle. Functionally, microtubule binding protein that promotes the stabilization of dynamic microtubules. Required for mitotic spindle formation. The chain is Protein STU1 (STU1) from Coccidioides immitis (strain RS) (Valley fever fungus).